Here is an 84-residue protein sequence, read N- to C-terminus: MGIIAWIIFGLIAGIIAKLIMPGRDGGGFFLTCILGIVGAVVGGWLATMFGIGGSISGFNLHSFLVAVVGAILVLGVFRLLQRE.

Transmembrane regions (helical) follow at residues 1–21, 27–47, and 58–78; these read MGIIAWIIFGLIAGIIAKLIM, GGFFLTCILGIVGAVVGGWLA, and GFNLHSFLVAVVGAILVLGVF.

This sequence belongs to the UPF0410 family.

It is found in the cell inner membrane. In Escherichia coli O127:H6 (strain E2348/69 / EPEC), this protein is UPF0410 protein YmgE (ymgE).